Consider the following 456-residue polypeptide: GTPase Der (456 aa).

EngA-type G domains are found at residues 4-169 (PVVA…PSKD) and 178-353 (VQLA…DQSR). Residues 10–17 (GRPNVGKS), 57–61 (DTGGL), 120–123 (NKCE), 184–191 (GRPNVGKS), 231–235 (DTAGI), and 296–299 (NKWD) contribute to the GTP site. One can recognise a KH-like domain in the interval 354-439 (RRVTTSVVNE…PIKLFWRGKQ (86 aa)).

It belongs to the TRAFAC class TrmE-Era-EngA-EngB-Septin-like GTPase superfamily. EngA (Der) GTPase family. As to quaternary structure, associates with the 50S ribosomal subunit.

Functionally, GTPase that plays an essential role in the late steps of ribosome biogenesis. In Prochlorococcus marinus (strain NATL1A), this protein is GTPase Der.